The following is a 309-amino-acid chain: Taste receptor type 2 member 113 (309 aa).

Residues 1-8 lie on the Extracellular side of the membrane; the sequence is MVAVLQST. A helical transmembrane segment spans residues 9–29; sequence FAIIFSMEFIVGTLGNGFIIL. Over 30-55 the chain is Cytoplasmic; sequence MTCIDWVRRRKISLVDQILTALAITR. A helical membrane pass occupies residues 56–76; the sequence is ITLILLVFIDWWVSVLFPALH. Residues 77-101 lie on the Extracellular side of the membrane; sequence ETGKILRMYFISWTVINHCNLWLTA. The helical transmembrane segment at 102–122 threads the bilayer; the sequence is SLSIIYFLKIASFSSIIFLYL. Over 123–127 the chain is Cytoplasmic; it reads KFRVK. A helical transmembrane segment spans residues 128-148; that stretch reads NVVFVTLLVSLFFLFINTAIV. The Extracellular segment spans residues 149 to 185; that stretch reads NVYFDVCFDGVQRNVSQVSRLYNHEQICKFLSFTNPM. N-linked (GlcNAc...) asparagine glycosylation is present at Asn162. A helical membrane pass occupies residues 186-206; sequence FAFIPFVTSMATFFLLIFSLW. Residues 207–229 are Cytoplasmic-facing; the sequence is RHLKNMKHNAEGCRDVSTIVHIR. The helical transmembrane segment at 230–250 threads the bilayer; that stretch reads ALQTIIVSVVLYSTFFLSFFV. Residues 251–262 lie on the Extracellular side of the membrane; that stretch reads KVWSSGSPERYL. The chain crosses the membrane as a helical span at residues 263–283; it reads IFLFVWALGNAVLPAHTFVLI. The Cytoplasmic segment spans residues 284–309; it reads WGNCRLRWASLSLMLWLRYRFKNIDV.

The protein belongs to the G-protein coupled receptor T2R family.

The protein localises to the membrane. Functionally, putative taste receptor which may play a role in the perception of bitterness. This is Taste receptor type 2 member 113 from Rattus norvegicus (Rat).